A 406-amino-acid polypeptide reads, in one-letter code: NAC transcription factor NAM-B1 (406 aa).

Over residues 1–11 the composition is skewed to polar residues; that stretch reads MGSPDSSSGSA. Residues 1-40 are disordered; the sequence is MGSPDSSSGSAQKPPRHQHQHQPPPPRRQGSAPELPPGFR. Residues 35-204 enclose the NAC domain; it reads LPPGFRFHPT…DWVLCRIYKK (170 aa). A DNA-binding region spans residues 137–210; it reads VGVKKALVFY…IYKKTSKAAA (74 aa).

The protein resides in the nucleus. In terms of biological role, transcription factor of the NAC family associated with the grain protein content (GPC). Sequences of the 11 European varieties of H.vulgare tested belongs to the same haplotype while the sequence found in H.spontaneum, an ancestor of the cultivated H.vulgare which has a higher GPC, belongs to an other haplotype. This Hordeum vulgare subsp. spontaneum (Wild barley) protein is NAC transcription factor NAM-B1 (NAM-B1).